A 157-amino-acid polypeptide reads, in one-letter code: DNA gyrase inhibitor (157 aa).

The protein belongs to the DNA gyrase inhibitor family. Interacts with DNA gyrase.

Its subcellular location is the cytoplasm. In terms of biological role, inhibits the supercoiling activity of DNA gyrase. Acts by inhibiting DNA gyrase at an early step, prior to (or at the step of) binding of DNA by the gyrase. It protects cells against toxins that target DNA gyrase, by inhibiting activity of these toxins and reducing the formation of lethal double-strand breaks in the cell. The polypeptide is DNA gyrase inhibitor (Yersinia enterocolitica serotype O:8 / biotype 1B (strain NCTC 13174 / 8081)).